We begin with the raw amino-acid sequence, 250 residues long: Transcriptional activator protein ExpR (250 aa).

Positions 173 to 238 (KSQEADLFSQ…HAIRLGVEMN (66 aa)) constitute an HTH luxR-type domain. The segment at residues 197–216 (YQEIALILGITTSTVKFHIG) is a DNA-binding region (H-T-H motif).

This sequence belongs to the autoinducer-regulated transcriptional regulatory protein family.

Its function is as follows. Functions as an OHLL responsive transcriptional regulator that acts in virulence (soft rot disease) through the activation of genes for plant tissue macerating enzymes. The sequence is that of Transcriptional activator protein ExpR (expR) from Dickeya dadantii (strain 3937) (Erwinia chrysanthemi (strain 3937)).